A 160-amino-acid polypeptide reads, in one-letter code: Cytochrome c-type biogenesis protein CcmE (160 aa).

Residues 1–8 lie on the Cytoplasmic side of the membrane; it reads MNPRRKNR. The helical; Signal-anchor for type II membrane protein transmembrane segment at 9-29 threads the bilayer; sequence LILVMLVLVGLGLATALVMYA. The Periplasmic segment spans residues 30-160; the sequence is LRSNIDLFYT…AVGDNSVRPS (131 aa). Heme contacts are provided by His-130 and Tyr-134. Over residues 133-148 the composition is skewed to basic and acidic residues; sequence KYTPPEIEDAMKKDHP. Residues 133–160 are disordered; that stretch reads KYTPPEIEDAMKKDHPAQAVGDNSVRPS.

Belongs to the CcmE/CycJ family.

The protein resides in the cell inner membrane. In terms of biological role, heme chaperone required for the biogenesis of c-type cytochromes. Transiently binds heme delivered by CcmC and transfers the heme to apo-cytochromes in a process facilitated by CcmF and CcmH. This is Cytochrome c-type biogenesis protein CcmE from Erwinia tasmaniensis (strain DSM 17950 / CFBP 7177 / CIP 109463 / NCPPB 4357 / Et1/99).